The following is a 153-amino-acid chain: Ribonuclease H (153 aa).

Positions 1–141 (MKHIEIYTDG…CDVLARDAAS (141 aa)) constitute an RNase H type-1 domain. The Mg(2+) site is built by aspartate 9, glutamate 47, aspartate 69, and aspartate 133.

Belongs to the RNase H family. Monomer. Mg(2+) is required as a cofactor.

The protein localises to the cytoplasm. The enzyme catalyses Endonucleolytic cleavage to 5'-phosphomonoester.. Functionally, endonuclease that specifically degrades the RNA of RNA-DNA hybrids. In Pseudoalteromonas atlantica (strain T6c / ATCC BAA-1087), this protein is Ribonuclease H.